We begin with the raw amino-acid sequence, 439 residues long: Cobyrinate a,c-diamide synthase (439 aa).

Residues 214 to 235 are disordered; it reads ETARAPPEVATTERNTGDSPAD. A GATase cobBQ-type domain is found at 237–428; sequence RVAVAQDSAF…CHCHGESGAF (192 aa). Cysteine 317 serves as the catalytic Nucleophile.

The protein belongs to the CobB/CbiA family. The cofactor is Mg(2+).

The enzyme catalyses cob(II)yrinate + 2 L-glutamine + 2 ATP + 2 H2O = cob(II)yrinate a,c diamide + 2 L-glutamate + 2 ADP + 2 phosphate + 2 H(+). It functions in the pathway cofactor biosynthesis; adenosylcobalamin biosynthesis; cob(II)yrinate a,c-diamide from sirohydrochlorin (anaerobic route): step 10/10. In terms of biological role, catalyzes the ATP-dependent amidation of the two carboxylate groups at positions a and c of cobyrinate, using either L-glutamine or ammonia as the nitrogen source. This Haloarcula marismortui (strain ATCC 43049 / DSM 3752 / JCM 8966 / VKM B-1809) (Halobacterium marismortui) protein is Cobyrinate a,c-diamide synthase.